Consider the following 183-residue polypeptide: Putative NAD(P)H nitroreductase YdjA (183 aa).

FMN-binding positions include 10–12 (RRS), R35, and H39. 121 to 126 (AAVAQG) lines the NAD(+) pocket. Position 131 to 133 (131 to 133 (WRS)) interacts with FMN.

Belongs to the nitroreductase family. In terms of assembly, homodimer. It depends on FMN as a cofactor.

This Escherichia coli O157:H7 protein is Putative NAD(P)H nitroreductase YdjA (ydjA).